Consider the following 321-residue polypeptide: Reticulon-2 (321 aa).

Disordered regions lie at residues 1–36 and 65–85; these read MGHV…SPVT and PPVR…PREE. The Reticulon domain occupies 134–321; the sequence is VKDLLYWRDI…TVKKPPAKQK (188 aa). A run of 2 helical transmembrane segments spans residues 163–183 and 250–270; these read FSVI…TLTL and FLVI…ITVL.

It localises to the endoplasmic reticulum membrane. The protein resides in the sarcoplasmic reticulum membrane. It is found in the cell membrane. Its subcellular location is the sarcolemma. The protein localises to the T-tubule. It localises to the cytoplasm. The protein resides in the myofibril. It is found in the sarcomere. Its subcellular location is the z line. The protein localises to the cytoskeleton. Its function is as follows. Inhibits amyloid precursor protein processing, probably by blocking BACE1 activity. Enhances trafficking of the glutamate transporter SLC1A1/EAAC1 from the endoplasmic reticulum to the cell surface. Plays a role in the translocation of SLC2A4/GLUT4 from intracellular membranes to the cell membrane which facilitates the uptake of glucose into the cell. The polypeptide is Reticulon-2 (Xenopus tropicalis (Western clawed frog)).